An 805-amino-acid polypeptide reads, in one-letter code: Transducer protein BasT (805 aa).

2 consecutive transmembrane segments (helical) span residues 25–45 (FNVLLLVVVIIVAAAGGYIHL) and 296–316 (NLAGLVVVALVGLLLVGLTVG). HAMP domains follow at residues 317–370 (RRTS…TAAS) and 437–490 (ERLE…ATLA). The region spanning 509–745 (SAAEIRSASD…EVVTMIDEVT (237 aa)) is the Methyl-accepting transducer domain. Positions 513–532 (IRSASDQVSESVQDISADAD) are disordered. Over residues 516-526 (ASDQVSESVQD) the composition is skewed to polar residues. A glutamate methyl ester (Glu) mark is found at E554, E736, and E763. Positions 752 to 779 (ATESQQVSAAAEEQAASVSEVAGRADDL) are disordered. Residues 754-773 (ESQQVSAAAEEQAASVSEVA) show a composition bias toward low complexity.

Belongs to the methyl-accepting chemotaxis (MCP) protein family. Interacts with CheA, CheY, CheW1 and CheW2. Methylated by CheR.

It is found in the cell membrane. Its function is as follows. Mediates chemotaxis towards five attractant amino acids (leucine, isoleucine, valine, methionine and cysteine). Probably transduces the signal from the substrate-binding protein BasB to the histidine kinase CheA. This is Transducer protein BasT (basT) from Halobacterium salinarum (strain ATCC 29341 / DSM 671 / R1).